We begin with the raw amino-acid sequence, 59 residues long: Large ribosomal subunit protein uL30 (59 aa).

Belongs to the universal ribosomal protein uL30 family. As to quaternary structure, part of the 50S ribosomal subunit.

The protein is Large ribosomal subunit protein uL30 of Syntrophotalea carbinolica (strain DSM 2380 / NBRC 103641 / GraBd1) (Pelobacter carbinolicus).